We begin with the raw amino-acid sequence, 1073 residues long: Probable lipase MIL1 (1073 aa).

Disordered regions lie at residues Met-1–Ser-151 and Leu-163–Asn-190. Composition is skewed to basic and acidic residues over residues Gln-54 to Lys-81 and Gly-101 to Asp-121. The APM2-interacting WQEMP motif motif lies at Trp-143–Pro-147. N-linked (GlcNAc...) asparagine glycans are attached at residues Asn-190, Asn-229, and Asn-236. The segment at Ser-230–Val-267 is disordered. Low complexity predominate over residues Thr-233–Glu-249. A compositionally biased stretch (acidic residues) spans Asn-252–Val-267. N-linked (GlcNAc...) asparagine glycosylation is present at Asn-280. Residues Phe-292–Leu-312 traverse the membrane as a helical segment. Positions Asn-385–Pro-448 are disordered. Residues Arg-404–Pro-427 show a composition bias toward polar residues. An N-linked (GlcNAc...) asparagine glycan is attached at Asn-411. Ser-435 bears the Phosphoserine mark. Residues Leu-457–Ser-477 traverse the membrane as a helical segment. A glycan (N-linked (GlcNAc...) asparagine) is linked at Asn-495. Helical transmembrane passes span Leu-553–Gly-573 and Ile-577–Val-597. Asn-726 carries an N-linked (GlcNAc...) asparagine glycan. Residues Trp-818–Ser-838 form a helical membrane-spanning segment. An N-linked (GlcNAc...) asparagine glycan is attached at Asn-850. Disordered regions lie at residues Gly-942–Ala-968 and Lys-1010–Ile-1073. The span at Pro-1027–Ser-1037 shows a compositional bias: pro residues. At Ser-1037 the chain carries Phosphoserine.

This sequence belongs to the TMCO4 family. Interacts with RPP0. Interacts with APM2.

It localises to the golgi apparatus membrane. Its subcellular location is the early endosome membrane. The protein localises to the cytoplasmic vesicle. It is found in the clathrin-coated vesicle membrane. Probable lipase that recruits the AP-1-related (AP-1R) complex to membranes via interaction with APM2. The AP-1R complex is an adapter protein complex that mediates of cargo protein SNC1 sorting in clathrin-coated vesicles. This chain is Probable lipase MIL1, found in Saccharomyces cerevisiae (strain ATCC 204508 / S288c) (Baker's yeast).